A 654-amino-acid polypeptide reads, in one-letter code: Fimbrin-2 (654 aa).

4 Calponin-homology (CH) domains span residues 124–241 (DSEK…KIQL), 269–372 (LPPE…QHRN), 394–500 (SREE…RYNI), and 515–623 (EITD…YWTL). Actin-binding stretches follow at residues 124 to 372 (DSEK…QHRN) and 394 to 623 (SREE…YWTL).

As to quaternary structure, interacts with F-actin.

Its subcellular location is the cytoplasm. It localises to the cytoskeleton. Functionally, cross-links actin filaments (F-actin). Stabilizes and prevents F-actin depolymerization mediated by profilin. May regulate actin cytoarchitecture, cell cycle, cell division, cell elongation and cytoplasmic tractus. The chain is Fimbrin-2 from Arabidopsis thaliana (Mouse-ear cress).